The following is a 374-amino-acid chain: Pectate lyase 2 (374 aa).

The N-terminal stretch at Met1–Ala22 is a signal peptide. Cys93 and Cys176 are disulfide-bonded. 4 residues coordinate Ca(2+): Asp150, Asp152, Glu187, and Asp191. Residue Arg239 is part of the active site. A disulfide bridge connects residues Cys350 and Cys373.

This sequence belongs to the polysaccharide lyase 1 family. PLADES subfamily. Requires Ca(2+) as cofactor.

Its subcellular location is the secreted. The catalysed reaction is Eliminative cleavage of (1-&gt;4)-alpha-D-galacturonan to give oligosaccharides with 4-deoxy-alpha-D-galact-4-enuronosyl groups at their non-reducing ends.. The protein operates within glycan metabolism; pectin degradation; 2-dehydro-3-deoxy-D-gluconate from pectin: step 2/5. Functionally, involved in maceration and soft-rotting of plant tissue. This chain is Pectate lyase 2 (pel2), found in Pectobacterium atrosepticum (strain SCRI 1043 / ATCC BAA-672) (Erwinia carotovora subsp. atroseptica).